The chain runs to 75 residues: Microcin H47 (75 aa).

Residues 1-15 constitute a propeptide that is removed on maturation; sequence MREITESQLRYISGA. Residues 30–50 traverse the membrane as a helical segment; the sequence is AIVGALAGIPGGPLGVVVGAV.

It localises to the secreted. The protein localises to the host cell membrane. In terms of biological role, bactericidal antibiotic. Active on bacteria phylogenetically related to the producing strain. This is Microcin H47 (mchB) from Escherichia coli O6:H1 (strain CFT073 / ATCC 700928 / UPEC).